The sequence spans 1001 residues: E3 ubiquitin-protein ligase BRE1B (1001 aa).

The segment at methionine 1–glycine 40 is disordered. A compositionally biased stretch (basic and acidic residues) spans proline 18–threonine 28. Residue lysine 20 is modified to N6-acetyllysine. A Phosphoserine modification is found at serine 42. Positions lysine 55–leucine 91 form a coiled coil. The segment at threonine 122–glycine 142 is disordered. 2 coiled-coil regions span residues lysine 189–leucine 377 and leucine 437–serine 525. 2 positions are modified to N6-acetyllysine: lysine 355 and lysine 517. Positions arginine 519–lysine 647 are disordered. Residues alanine 565–serine 576 show a composition bias toward low complexity. Glycyl lysine isopeptide (Lys-Gly) (interchain with G-Cter in SUMO2) cross-links involve residues lysine 578 and lysine 579. Phosphoserine is present on residues serine 584 and serine 585. Composition is skewed to basic and acidic residues over residues arginine 602 to glycine 619 and arginine 633 to lysine 647. Residues alanine 627–leucine 946 adopt a coiled-coil conformation. The RING-type zinc-finger motif lies at cysteine 948–asparagine 987.

It belongs to the BRE1 family. Component of the RNF20/40 complex (also known as BRE1 complex) probably composed of 2 copies of RNF20/BRE1A and 2 copies of RNF40/BRE1B. Interacts with UBE2E1/UBCH6. Interacts with RB1 and WAC.

The protein localises to the nucleus. The enzyme catalyses S-ubiquitinyl-[E2 ubiquitin-conjugating enzyme]-L-cysteine + [acceptor protein]-L-lysine = [E2 ubiquitin-conjugating enzyme]-L-cysteine + N(6)-ubiquitinyl-[acceptor protein]-L-lysine.. Its pathway is protein modification; protein ubiquitination. Functionally, component of the RNF20/40 E3 ubiquitin-protein ligase complex that mediates monoubiquitination of 'Lys-120' of histone H2B (H2BK120ub1). H2BK120ub1 gives a specific tag for epigenetic transcriptional activation and is also prerequisite for histone H3 'Lys-4' and 'Lys-79' methylation (H3K4me and H3K79me, respectively). It thereby plays a central role in histone code and gene regulation. The RNF20/40 complex forms a H2B ubiquitin ligase complex in cooperation with the E2 enzyme UBE2A or UBE2B; reports about the cooperation with UBE2E1/UBCH are contradictory. Required for transcriptional activation of Hox genes. In Mus musculus (Mouse), this protein is E3 ubiquitin-protein ligase BRE1B (Rnf40).